The following is a 350-amino-acid chain: Galactokinase (350 aa).

Position 14–17 (14–17 (EHTD)) interacts with substrate. ATP is bound by residues S46 and 96-102 (GAGLSSS). Residues S102 and E134 each coordinate Mg(2+). D146 serves as the catalytic Proton acceptor. Residue Y196 coordinates substrate.

The protein belongs to the GHMP kinase family. GalK subfamily.

The protein localises to the cytoplasm. The catalysed reaction is alpha-D-galactose + ATP = alpha-D-galactose 1-phosphate + ADP + H(+). It participates in carbohydrate metabolism; galactose metabolism. Functionally, catalyzes the transfer of the gamma-phosphate of ATP to D-galactose to form alpha-D-galactose-1-phosphate (Gal-1-P). The sequence is that of Galactokinase from Thermotoga neapolitana.